A 364-amino-acid polypeptide reads, in one-letter code: G-protein coupled receptor 4 (364 aa).

Over 1 to 8 (MCNVSQDS) the chain is Extracellular. N-linked (GlcNAc...) asparagine glycosylation is present at asparagine 3. The helical transmembrane segment at 9-45 (CNIDSRLDSLFPPTLYIFVMVIGFPTNCLSLWAAFVQ) threads the bilayer. Cystine bridges form between cysteine 9-cysteine 258 and cysteine 90-cysteine 168. Topologically, residues 46–49 (VRQK) are cytoplasmic. A helical transmembrane segment spans residues 50–80 (NELGVYLLNLSISDLLYIATLPPWVNYFLHQ). Topologically, residues 81–85 (DNWIH) are extracellular. Residues 86-121 (GPESCKLFGFILYTNIYISIGFLSCISVDRYLAVAH) form a helical membrane-spanning segment. Residues 122–129 (PLKFAKVR) are Cytoplasmic-facing. Residues 130-156 (RVKTAAVVSAVVWAIEIGANSAPLFHN) form a helical membrane-spanning segment. Topologically, residues 157–172 (ELFEDRFNHTFCFEKY) are extracellular. The segment at 157-172 (ELFEDRFNHTFCFEKY) is extracellular loop 2 (ECL2). A glycan (N-linked (GlcNAc...) asparagine) is linked at asparagine 164. A helical membrane pass occupies residues 173 to 210 (PMEDWVAQMNLYRVFVGFLFPWVLMLFCYQGILRAVKT). The Cytoplasmic segment spans residues 211-214 (NVST). The chain crosses the membrane as a helical span at residues 215 to 250 (EREEKAKIKRLALSLIAILLFCFAPYHLILLSRSVV). Residues 251–260 (YLGQPCDCTF) lie on the Extracellular side of the membrane. The helical transmembrane segment at 261–289 (EENIFTAYHVSLALTSLNCVADPILYCLA) threads the bilayer. The Cytoplasmic portion of the chain corresponds to 290–364 (NEGARSEVTR…RVRRRRDCKC (75 aa)).

It belongs to the G-protein coupled receptor 1 family.

The protein localises to the cell membrane. With respect to regulation, activated by a network of residues that connects an extracellular-facing cavity to Glu-145, a conserved charged residue buried in the transmembrane core of the receptor. Protonation likely drives conformational changes in extracellular loop 2 (ECL2), which stabilizes movement of transmembrane 3 (TM3) and a series of rearrangements that connect the extracellular-facing cavity to Glu-145, a residue only conserved in proton-sensing G-protein coupled receptors. Functionally, proton-sensing G-protein coupled receptor activated by extracellular pH, which is required to monitor pH changes and generate adaptive reactions. Ligand binding causes a conformation change that triggers signaling via guanine nucleotide-binding proteins (G proteins) and modulates the activity of downstream effectors, such as adenylate cyclase. In Callorhinchus milii (Ghost shark), this protein is G-protein coupled receptor 4.